The sequence spans 348 residues: ELAV-like protein 3 (348 aa).

3 RRM domains span residues 34–112 (TNLI…YARP), 120–200 (ANLY…FANN), and 265–343 (WCIF…FKTS).

This sequence belongs to the RRM elav family. In terms of tissue distribution, expression is neural-specific in both embryos and adults. Expressed from neurula stage onwards in primary motor-, inter- and sensory-neurons. Expressed in the closing neural tube and motor neurons of stage 18 embryos, and primarily in the ventricular zone and dorsal region of the tailbud and adult brain. Expressed from stage 26 onwards in the differentiating ganglion cell layer of the retina, extending to the inner nuclear layer at later stages.

Functionally, RNA-binding protein that binds to AU-rich element (ARE) sequences of target mRNAs. May also bind poly-A tracts via RRM 3. May be involved in neuronal differentiation and maintenance. This Xenopus laevis (African clawed frog) protein is ELAV-like protein 3 (elavl3).